We begin with the raw amino-acid sequence, 315 residues long: MTLHLTRQGATLRLRQGRLLLEEEGREVAGFPARQVRSVALWGNVRLSTPALVFLLRQGVPVFFYSLEGFLHGVAGAYPDPHPAHLRAQFAAEGLPLARAFVVGKLRSALALLERHRLPEAGGVVEALARAEGASELERLRGAEGEGSRVYFQGLARLLGPYGFGGRTRRPPRDPVNAALSYGYALLLGRVLVAVRLAGLHPEVGFLHAEGRRSPALALDLMEEFRVPVVDQVVLSAFRRGLLTPSHAEVREGGVYLNEEGRRRLIQLFEERLLEGVSHPLGFRKPLGETIEVQAQRLKAALLGRGRYTPFYLWR.

Glu144, His208, and Glu223 together coordinate Mn(2+).

The protein belongs to the CRISPR-associated endonuclease Cas1 family. As to quaternary structure, homodimer, forms a heterotetramer with a Cas2 homodimer. It depends on Mg(2+) as a cofactor. Mn(2+) serves as cofactor.

In terms of biological role, CRISPR (clustered regularly interspaced short palindromic repeat), is an adaptive immune system that provides protection against mobile genetic elements (viruses, transposable elements and conjugative plasmids). CRISPR clusters contain spacers, sequences complementary to antecedent mobile elements, and target invading nucleic acids. CRISPR clusters are transcribed and processed into CRISPR RNA (crRNA). Acts as a dsDNA endonuclease. Involved in the integration of spacer DNA into the CRISPR cassette. The chain is CRISPR-associated endonuclease Cas1 1 from Thermus thermophilus (strain ATCC 27634 / DSM 579 / HB8).